The primary structure comprises 118 residues: Small ribosomal subunit protein uS13 (118 aa).

Residues 91 to 118 form a disordered region; that stretch reads HRRGLPVRGQRTKTNARTRKGPRKPIKK.

The protein belongs to the universal ribosomal protein uS13 family. As to quaternary structure, part of the 30S ribosomal subunit. Forms a loose heterodimer with protein S19. Forms two bridges to the 50S subunit in the 70S ribosome.

Functionally, located at the top of the head of the 30S subunit, it contacts several helices of the 16S rRNA. In the 70S ribosome it contacts the 23S rRNA (bridge B1a) and protein L5 of the 50S subunit (bridge B1b), connecting the 2 subunits; these bridges are implicated in subunit movement. Contacts the tRNAs in the A and P-sites. The sequence is that of Small ribosomal subunit protein uS13 from Serratia proteamaculans (strain 568).